The sequence spans 135 residues: UPF0225 protein CV_3559 (135 aa).

Belongs to the UPF0225 family.

The polypeptide is UPF0225 protein CV_3559 (Chromobacterium violaceum (strain ATCC 12472 / DSM 30191 / JCM 1249 / CCUG 213 / NBRC 12614 / NCIMB 9131 / NCTC 9757 / MK)).